Here is a 122-residue protein sequence, read N- to C-terminus: Small ribosomal subunit protein uS13c (122 aa).

The protein belongs to the universal ribosomal protein uS13 family. Part of the 30S ribosomal subunit.

It localises to the plastid. It is found in the chloroplast. Located at the top of the head of the 30S subunit, it contacts several helices of the 16S rRNA. This chain is Small ribosomal subunit protein uS13c, found in Cyanidium caldarium (Red alga).